A 66-amino-acid polypeptide reads, in one-letter code: Phylloseptin-Az3 (66 aa).

The first 22 residues, 1–22 (MAFLKKSLFLVLFLGLVSLSIC), serve as a signal peptide directing secretion. Positions 23–44 (EEEKRETEEEEYNQEDDDKSEE) are excised as a propeptide. Phenylalanine amide is present on F65.

As to expression, expressed by the skin glands.

It is found in the secreted. Has antimicrobial activity. The polypeptide is Phylloseptin-Az3 (Pithecopus azureus (Orange-legged monkey tree frog)).